We begin with the raw amino-acid sequence, 633 residues long: Pentatricopeptide repeat-containing protein At1g43980, mitochondrial (633 aa).

The N-terminal 30 residues, 1-30, are a transit peptide targeting the mitochondrion; it reads MFQLLRRAHGLCMPSSLYFSRLVNRSLLSK. 14 PPR repeats span residues 50 to 80, 81 to 111, 112 to 146, 147 to 178, 180 to 210, 211 to 245, 246 to 280, 281 to 311, 312 to 346, 347 to 380, 381 to 411, 412 to 447, 448 to 483, and 484 to 514; these read TTYW…IPDK, NTIT…MPER, DVVS…EIRP, TEFT…GVSR, NLVV…MEDR, DVVS…EIQP, DEYT…GFLS, NSIV…LEKW, DSVL…SVRP, DKFT…GFDL, DTAV…TDGK, DLIF…SLKP, DRVT…GVNP, and GNEH…IPFE. The interval 519-594 is type E motif; that stretch reads IWEPILCASL…AQGSSKISIE (76 aa).

The protein belongs to the PPR family. PCMP-E subfamily.

It is found in the mitochondrion. In Arabidopsis thaliana (Mouse-ear cress), this protein is Pentatricopeptide repeat-containing protein At1g43980, mitochondrial (PCMP-E58).